Here is a 1495-residue protein sequence, read N- to C-terminus: Pregnancy zone protein (1495 aa).

The N-terminal stretch at 1–24 is a signal peptide; it reads MRRNQLPTPAFLLLFLLLPRDATT. A disulfide bridge links Cys-48 with Cys-86. N-linked (GlcNAc...) asparagine glycosylation is found at Asn-55 and Asn-157. 2 disulfides stabilise this stretch: Cys-249/Cys-298 and Cys-267/Cys-286. Residues Asn-382, Asn-405, and Asn-412 are each glycosylated (N-linked (GlcNAc...) asparagine). A disulfide bond links Cys-469 and Cys-562. Asn-568 is a glycosylation site (N-linked (GlcNAc...) asparagine). Intrachain disulfides connect Cys-594-Cys-783, Cys-642-Cys-689, Cys-833-Cys-861, Cys-859-Cys-895, Cys-933-Cys-1339, and Cys-1092-Cys-1140. A bait region region spans residues 686–744; sequence PRFCQEFQHYPAMGGVAPQALAVAASGPGSSFRAMGVPMMGLDYSDEINQVVEVRETVR. Residues Asn-881 and Asn-942 are each glycosylated (N-linked (GlcNAc...) asparagine). Positions 984 to 987 form a cross-link, isoglutamyl cysteine thioester (Cys-Gln); the sequence is CGEQ. Asn-1003 is a glycosylation site (N-linked (GlcNAc...) asparagine). Asn-1385 and Asn-1443 each carry an N-linked (GlcNAc...) asparagine glycan.

This sequence belongs to the protease inhibitor I39 (alpha-2-macroglobulin) family. Highest expression in liver, medium expression in ovary, heart and stomach. Low expression in lung, kidney and uterus. Protein found in plasma.

It is found in the secreted. Functionally, is able to inhibit all four classes of proteinases by a unique 'trapping' mechanism. This protein has a peptide stretch, called the 'bait region' which contains specific cleavage sites for different proteinases. When a proteinase cleaves the bait region, a conformational change is induced in the protein which traps the proteinase. The entrapped enzyme remains active against low molecular weight substrates (activity against high molecular weight substrates is greatly reduced). Following cleavage in the bait region, a thioester bond is hydrolyzed and mediates the covalent binding of the protein to the proteinase. This is Pregnancy zone protein (Pzp) from Mus musculus (Mouse).